The sequence spans 208 residues: Large ribosomal subunit protein uL3 (208 aa).

The residue at position 149 (Gln149) is an N5-methylglutamine.

It belongs to the universal ribosomal protein uL3 family. As to quaternary structure, part of the 50S ribosomal subunit. Forms a cluster with proteins L14 and L19. Post-translationally, methylated by PrmB.

In terms of biological role, one of the primary rRNA binding proteins, it binds directly near the 3'-end of the 23S rRNA, where it nucleates assembly of the 50S subunit. The protein is Large ribosomal subunit protein uL3 of Actinobacillus succinogenes (strain ATCC 55618 / DSM 22257 / CCUG 43843 / 130Z).